The chain runs to 241 residues: DNA repair protein RecO (241 aa).

It belongs to the RecO family.

Its function is as follows. Involved in DNA repair and RecF pathway recombination. This is DNA repair protein RecO from Rickettsia canadensis (strain McKiel).